We begin with the raw amino-acid sequence, 381 residues long: G-protein coupled receptor homolog Q2/3L (381 aa).

Residues 1-91 lie on the Extracellular side of the membrane; the sequence is MNYTLSTVSS…HCDDGVDTTS (91 aa). N-linked (GlcNAc...) asparagine; by host glycans are attached at residues Asn-2, Asn-15, Asn-19, Asn-41, Asn-50, Asn-56, and Asn-62. Residues 92–112 form a helical membrane-spanning segment; sequence FGLITLYSTIFFLGLFGNIIV. Residues 113–126 are Cytoplasmic-facing; sequence LTVLRKYKIKTIQD. The helical transmembrane segment at 127-147 threads the bilayer; the sequence is MFLLNLTLSDLIFVLVFPFNL. The Extracellular segment spans residues 148–165; it reads YDSIAKQWSLGDCLCKFK. Residues 166 to 186 traverse the membrane as a helical segment; it reads AMFYFVGFYNSMSFITLMSID. At 187-206 the chain is on the cytoplasmic side; the sequence is RYLAVVHPVKSMPIRTKRYG. A helical transmembrane segment spans residues 207–227; it reads IVLSMVVWIVSTIESFPIMLF. At 228–251 the chain is on the extracellular side; it reads YETKKVYGITYCHVFYNDNAKIWK. A helical membrane pass occupies residues 252-272; it reads LFINFEINIFGMIIPLTILLY. The Cytoplasmic segment spans residues 273-294; that stretch reads CYYKILNTLKTSQTKNKKAIKM. Residues 295–315 form a helical membrane-spanning segment; the sequence is VFLIVICSVLFLLPFSVTVFV. At 316–336 the chain is on the extracellular side; sequence SSLYLLNVFSGCMALRFVNLA. Residues 337 to 357 form a helical membrane-spanning segment; it reads VHVAEIVSLCHCFINPLIYAF. The Cytoplasmic portion of the chain corresponds to 358–381; the sequence is CSREFTKKLLRLRTTSSAGSISIG.

This sequence belongs to the G-protein coupled receptor 1 family.

Its subcellular location is the host cell membrane. Its function is as follows. Putative chemokine receptor. The sequence is that of G-protein coupled receptor homolog Q2/3L from Ovis aries (Sheep).